The primary structure comprises 853 residues: Cytochrome P450 monooxygenase mpaDE (853 aa).

The Lumenal segment spans residues 1-6; sequence MKSLSL. Residues 7 to 29 traverse the membrane as a helical segment; it reads TWITAVAVVLYLVQRYVRSYWRL. The Cytoplasmic segment spans residues 30-853; that stretch reads KDIPGPVLAK…DIENSIEGQK (824 aa). Residue Cys-449 participates in heme binding.

This sequence belongs to the cytochrome P450 family. Requires heme as cofactor.

Its subcellular location is the endoplasmic reticulum membrane. The enzyme catalyses 5-methylorsellinate + reduced [NADPH--hemoprotein reductase] + O2 = 4,6-dihydroxy-2-(hydroxymethyl)-3-methylbenzoate + oxidized [NADPH--hemoprotein reductase] + H2O + H(+). It catalyses the reaction 4,6-dihydroxy-2-(hydroxymethyl)-3-methylbenzoate + H(+) = 5,7-dihydroxy-4-methylphthalide + H2O. Its pathway is secondary metabolite biosynthesis; terpenoid biosynthesis. Cytochrome P450 monooxygenase; part of the gene cluster that mediates the biosynthesis of mycophenolic acid (MPA), the first isolated antibiotic natural product in the world obtained from a culture of Penicillium brevicompactum in 1893. MpaDE is an endoplasmic reticulum-bound enzyme that catalyzes the conversion of 5-methylorsellinic acid (5MOA) into the phthalide compound 5,7-dihydroxy-4,6-dimethylphthalide (DHMP). MpaDE first catalyzes hydroxylation of 5-MOA to 4,6-dihydroxy-2-(hydroxymethyl)-3-methylbenzoic acid (DHMB), and then acts as a lactone synthase that catalyzes the ring closure to convert DHMB into DHMP. The first step of the pathway is the synthesis of 5-methylorsellinic acid (5MOA) by the cytosolic polyketide synthase mpaC. 5MOA is then converted to the phthalide compound 5,7-dihydroxy-4,6-dimethylphthalide (DHMP) by the endoplasmic reticulum-bound cytochrome P450 monooxygenase mpaDE. MpaDE first catalyzes hydroxylation of 5-MOA to 4,6-dihydroxy-2-(hydroxymethyl)-3-methylbenzoic acid (DHMB). MpaDE then acts as a lactone synthase that catalyzes the ring closure to convert DHMB into DHMP. The next step is the prenylation of DHMP by the Golgi apparatus-associated prenyltransferase mpaA to yield farnesyl-DHMP (FDHMP). The ER-bound oxygenase mpaB then mediates the oxidative cleavage the C19-C20 double bond in FDHMP to yield FDHMP-3C via a mycophenolic aldehyde intermediate. The O-methyltransferase mpaG catalyzes the methylation of FDHMP-3C to yield MFDHMP-3C. After the cytosolic methylation of FDHMP-3C, MFDHMP-3C enters into peroxisomes probably via free diffusion due to its low molecular weight. Upon a peroxisomal CoA ligation reaction, catalyzed by a beta-oxidation component enzyme acyl-CoA ligase ACL891, MFDHMP-3C-CoA would then be restricted to peroxisomes for the following beta-oxidation pathway steps. The peroxisomal beta-oxidation machinery than converts MFDHMP-3C-CoA into MPA_CoA, via a beta-oxidation chain-shortening process. Finally mpaH acts as a peroxisomal acyl-CoA hydrolase with high substrate specificity toward MPA-CoA to release the final product MPA. In Penicillium brevicompactum, this protein is Cytochrome P450 monooxygenase mpaDE.